A 299-amino-acid chain; its full sequence is Serpentine receptor class gamma-30 (299 aa).

7 helical membrane-spanning segments follow: residues 18–38 (GIQF…IKVL), 59–79 (ILSV…NYIP), 98–118 (ILFI…FMVV), 137–157 (IIPH…WTAF), 189–209 (IISS…MLCI), 223–243 (LTAS…MNIY), and 260–280 (ALTA…MLCL).

The protein belongs to the nematode receptor-like protein srg family.

The protein localises to the membrane. This chain is Serpentine receptor class gamma-30 (srg-30), found in Caenorhabditis elegans.